The sequence spans 150 residues: Large ribosomal subunit protein bL9 (150 aa).

It belongs to the bacterial ribosomal protein bL9 family.

Functionally, binds to the 23S rRNA. In Albidiferax ferrireducens (strain ATCC BAA-621 / DSM 15236 / T118) (Rhodoferax ferrireducens), this protein is Large ribosomal subunit protein bL9.